Reading from the N-terminus, the 73-residue chain is Cell division protein ZapB (73 aa).

Positions Leu-3 to Val-66 form a coiled coil.

Belongs to the ZapB family. Homodimer. The ends of the coiled-coil dimer bind to each other, forming polymers. Interacts with FtsZ.

The protein localises to the cytoplasm. In terms of biological role, non-essential, abundant cell division factor that is required for proper Z-ring formation. It is recruited early to the divisome by direct interaction with FtsZ, stimulating Z-ring assembly and thereby promoting cell division earlier in the cell cycle. Its recruitment to the Z-ring requires functional FtsA or ZipA. The chain is Cell division protein ZapB from Shewanella frigidimarina (strain NCIMB 400).